A 486-amino-acid polypeptide reads, in one-letter code: Glycogen synthase (486 aa).

Lys15 contributes to the ADP-alpha-D-glucose binding site.

This sequence belongs to the glycosyltransferase 1 family. Bacterial/plant glycogen synthase subfamily.

The catalysed reaction is [(1-&gt;4)-alpha-D-glucosyl](n) + ADP-alpha-D-glucose = [(1-&gt;4)-alpha-D-glucosyl](n+1) + ADP + H(+). It functions in the pathway glycan biosynthesis; glycogen biosynthesis. Functionally, synthesizes alpha-1,4-glucan chains using ADP-glucose. This chain is Glycogen synthase, found in Thermotoga petrophila (strain ATCC BAA-488 / DSM 13995 / JCM 10881 / RKU-1).